Consider the following 187-residue polypeptide: Avirulence protein ATR39-2 (187 aa).

The N-terminal stretch at 1–20 (MVKCTPLLALTVIVSAGSDA) is a signal peptide. A RxLR-dEER motif is present at residues 49–66 (RVLRASDVPNEVAAGESR).

The protein belongs to the RxLR effector family.

The protein localises to the secreted. The protein resides in the host cell. In terms of biological role, secreted effector that acts as an elicitor of hypersensitive response (HR) specifically on plants carrying defense protein RPP39. The allele ATR39-1 is recognized by RPP39, whereas the ATR39-2 allele is nor recognized. The protein is Avirulence protein ATR39-2 of Hyaloperonospora arabidopsidis (strain Emoy2) (Downy mildew agent).